Reading from the N-terminus, the 281-residue chain is Ribosomal RNA small subunit methyltransferase A (281 aa).

S-adenosyl-L-methionine-binding residues include histidine 25, leucine 27, glycine 52, glutamate 74, aspartate 100, and asparagine 119.

The protein belongs to the class I-like SAM-binding methyltransferase superfamily. rRNA adenine N(6)-methyltransferase family. RsmA subfamily.

It localises to the cytoplasm. The enzyme catalyses adenosine(1518)/adenosine(1519) in 16S rRNA + 4 S-adenosyl-L-methionine = N(6)-dimethyladenosine(1518)/N(6)-dimethyladenosine(1519) in 16S rRNA + 4 S-adenosyl-L-homocysteine + 4 H(+). In terms of biological role, specifically dimethylates two adjacent adenosines (A1518 and A1519) in the loop of a conserved hairpin near the 3'-end of 16S rRNA in the 30S particle. May play a critical role in biogenesis of 30S subunits. The polypeptide is Ribosomal RNA small subunit methyltransferase A (Paramagnetospirillum magneticum (strain ATCC 700264 / AMB-1) (Magnetospirillum magneticum)).